The sequence spans 209 residues: NADH-quinone oxidoreductase subunit C (209 aa).

Belongs to the complex I 30 kDa subunit family. NDH-1 is composed of 14 different subunits. Subunits NuoB, C, D, E, F, and G constitute the peripheral sector of the complex.

The protein localises to the cell inner membrane. The enzyme catalyses a quinone + NADH + 5 H(+)(in) = a quinol + NAD(+) + 4 H(+)(out). NDH-1 shuttles electrons from NADH, via FMN and iron-sulfur (Fe-S) centers, to quinones in the respiratory chain. The immediate electron acceptor for the enzyme in this species is believed to be ubiquinone. Couples the redox reaction to proton translocation (for every two electrons transferred, four hydrogen ions are translocated across the cytoplasmic membrane), and thus conserves the redox energy in a proton gradient. The sequence is that of NADH-quinone oxidoreductase subunit C from Bordetella petrii (strain ATCC BAA-461 / DSM 12804 / CCUG 43448).